Here is a 446-residue protein sequence, read N- to C-terminus: MKEIETLKEEYPLLNKLIATEEVFWVNPNMEKYETAIKDSPLSEENVKDAEERLKRFASYIAKVFPETKETKGIIESPLLKIPSMKQALEKNYEQPILGELLLKCDSHLPISGSIKARGGIYEVLKHAEQLALQHGMLTEEDDYSILDSDTCREFFATYSIAVGSTGNLGLSIGIMSAKLGFNVTVHMSADAKQWKKDLLRSKGVNVIEYEADYSKAVEEGRRQADADPSCYFVDDENSHDLFLGYAVAASRLQKQLEELKIVVDEEHPLFVYLPCGVGGGPGGVAFGLKLLYKDNVHCFFAEPTHSPCMLIGLMTGLHDKIAVQDIGIDNVTDADGLAVGRPSGFVGKTMEPFLSGNYTVSDEELYRLLKELADTENIYLEPSALAGMIGPVKVCKEDAYLQKQQLMEKVQKGTHIVWGTGGSMVPEDVMNGYYKTGEALTILEK.

Lys-116 is modified (N6-(pyridoxal phosphate)lysine).

This sequence belongs to the serine/threonine dehydratase family. DsdA subfamily. Pyridoxal 5'-phosphate is required as a cofactor.

The catalysed reaction is D-serine = pyruvate + NH4(+). The sequence is that of Probable D-serine dehydratase from Bacillus cereus (strain ZK / E33L).